Here is a 255-residue protein sequence, read N- to C-terminus: MRIFVFLVLLTVAIGTENLNSHVFPRPLIIEYPEKQLRDELKCTTWRFVVETNNLSPWKTIPEECADYVKEYMVGPGYKMEIDRVSDEAGEYAKSVDLGDDGRDVWIFDVDETLLSNLPYYSDHRYGLEVFDDVEFDKWVENGTAPALGSSLKLYQEVLKLGFKVFLLTGRSERHRSVTVENLMNAGFHDWHKLILRGSDDHGKTATTYKSERRNAMVEEGFRIVGNSGDQWSDLLGSSMSYRSFKLPNPMYYIL.

Positions 1-15 (MRIFVFLVLLTVAIG) are cleaved as a signal peptide. The N-linked (GlcNAc...) asparagine glycan is linked to Asn-142.

The protein belongs to the APS1/VSP family.

The catalysed reaction is a phosphate monoester + H2O = an alcohol + phosphate. This Solanum lycopersicum (Tomato) protein is Acid phosphatase 1 (APS1).